The following is a 222-amino-acid chain: Uracil-DNA glycosylase (222 aa).

Residue D66 is the Proton acceptor of the active site.

Belongs to the uracil-DNA glycosylase (UDG) superfamily. UNG family.

The protein resides in the cytoplasm. It carries out the reaction Hydrolyzes single-stranded DNA or mismatched double-stranded DNA and polynucleotides, releasing free uracil.. In terms of biological role, excises uracil residues from the DNA which can arise as a result of misincorporation of dUMP residues by DNA polymerase or due to deamination of cytosine. The sequence is that of Uracil-DNA glycosylase from Porphyromonas gingivalis (strain ATCC 33277 / DSM 20709 / CIP 103683 / JCM 12257 / NCTC 11834 / 2561).